The chain runs to 612 residues: Heparan-sulfate 6-O-sulfotransferase 2 (612 aa).

Residues 1–4 lie on the Cytoplasmic side of the membrane; that stretch reads MALP. Residues 5-27 form a helical; Signal-anchor for type II membrane protein membrane-spanning segment; the sequence is AFAARALGPPLQPEQGAPARTTC. The disordered stretch occupies residues 9-52; that stretch reads RALGPPLQPEQGAPARTTCPRRHSRVEAELAASRPGSVAASVRA. Residues 28–612 lie on the Lumenal side of the membrane; the sequence is PRRHSRVEAE…DYIGSVETWR (585 aa). N-linked (GlcNAc...) asparagine glycosylation occurs at asparagine 209. 233 to 241 is a 3'-phosphoadenylyl sulfate binding site; it reads HIQKTGGTT. Substrate is bound by residues 263–264, arginine 280, tryptophan 285, and histidine 290; that span reads KK. Catalysis depends on histidine 290, which acts as the Proton acceptor. 2 residues coordinate 3'-phosphoadenylyl sulfate: arginine 325 and serine 333. Positions 337 and 344 each coordinate substrate. Residue asparagine 404 is glycosylated (N-linked (GlcNAc...) asparagine). 457–459 is a binding site for 3'-phosphoadenylyl sulfate; it reads TQY. N-linked (GlcNAc...) asparagine glycosylation occurs at asparagine 460. 463 to 464 contacts 3'-phosphoadenylyl sulfate; the sequence is RA. The tract at residues 529–612 is disordered; sequence HFQSQSQGQS…DYIGSVETWR (84 aa). Positions 531-564 are enriched in low complexity; it reads QSQSQGQSQSQSPGQNLSQNPNPNPNQNLTQNLS. N-linked (GlcNAc...) asparagine glycosylation is found at asparagine 546, asparagine 558, asparagine 562, asparagine 574, and asparagine 599. Residues 565 to 577 are compositionally biased toward polar residues; that stretch reads HNLTPSSNPNSTQ.

The protein belongs to the sulfotransferase 6 family.

The protein resides in the membrane. The catalysed reaction is alpha-D-glucosaminyl-[heparan sulfate](n) + 3'-phosphoadenylyl sulfate = 6-sulfo-alpha-D-glucosaminyl-[heparan sulfate](n) + adenosine 3',5'-bisphosphate + H(+). 6-O-sulfation enzyme which catalyzes the transfer of sulfate from 3'-phosphoadenosine 5'-phosphosulfate (PAPS) to position 6 of the N-sulfoglucosamine residue (GlcNS) of heparan sulfate. The chain is Heparan-sulfate 6-O-sulfotransferase 2 (Hs6st2) from Mus musculus (Mouse).